We begin with the raw amino-acid sequence, 172 residues long: Chromosome-anchoring protein RacA (172 aa).

The segment at residues 5 to 25 (TSDVAIRLGVSPKTIQRWVRK) is a DNA-binding region (H-T-H motif). 2 disordered regions span residues 57–76 (AAME…RNNI) and 142–172 (QLNN…GLFA). Residues 62–71 (PPTPKRPPTP) are compositionally biased toward pro residues. Residues 83–146 (ESIEPEIARV…ARLEQQLNNR (64 aa)) are a coiled coil. The span at 142-151 (QLNNRPPSSH) shows a compositional bias: polar residues.

The protein belongs to the RacA family.

Its subcellular location is the cytoplasm. Functionally, required for the formation of axial filaments and for anchoring the origin regions at the cell poles in sporulating cells, thus ensuring proper chromosome segregation in the prespore. Binds in a dispersed manner throughout the chromosome but preferentially to sites clustered in the origin portion of the chromosome, causing condensation of the chromosome and its remodeling into an elongated, anchored structure. The chain is Chromosome-anchoring protein RacA from Geobacillus kaustophilus (strain HTA426).